Consider the following 503-residue polypeptide: ATP synthase subunit alpha (503 aa).

An ATP-binding site is contributed by 170 to 177; it reads GDRQTGKT.

In terms of assembly, F-type ATPases have 2 components, CF(1) - the catalytic core - and CF(0) - the membrane proton channel. CF(1) has five subunits: alpha(3), beta(3), gamma(1), delta(1), epsilon(1). CF(0) has four main subunits: a(1), b(1), b'(1) and c(9-12).

It is found in the cellular thylakoid membrane. The catalysed reaction is ATP + H2O + 4 H(+)(in) = ADP + phosphate + 5 H(+)(out). Its activity is regulated as follows. Inhibited by dicyclohexylcarbodiimide. In terms of biological role, produces ATP from ADP in the presence of a proton gradient across the membrane. The alpha chain is a regulatory subunit. Its function is as follows. The complex from the organism is particularly stable to disruption and remains functional after 6 hrs at 55 degrees Celsius. The chain is ATP synthase subunit alpha from Thermosynechococcus vestitus (strain NIES-2133 / IAM M-273 / BP-1).